The sequence spans 412 residues: Zinc finger protein 821 (412 aa).

The disordered stretch occupies residues Arg26–Lys83. Over residues Ser58–Gln67 the composition is skewed to acidic residues. 2 consecutive C2H2-type zinc fingers follow at residues Gly116 to His140 and Tyr150 to His172. The stretch at Lys257–Gln366 forms a coiled coil. The interval Arg278–Arg319 is disordered.

The protein belongs to the krueppel C2H2-type zinc-finger protein family.

It is found in the nucleus. Its function is as follows. May be involved in transcriptional regulation. This Bos taurus (Bovine) protein is Zinc finger protein 821 (ZNF821).